We begin with the raw amino-acid sequence, 95 residues long: Microcin E492 immunity protein (95 aa).

3 helical membrane-spanning segments follow: residues 1–21, 35–55, and 67–87; these read MTLL…FCII, VIVL…TKVY, and YLFC…ILTI.

This sequence belongs to the MceB microcin immunity protein family.

The protein localises to the cell inner membrane. Its function is as follows. Protect the producing cell against microcin E492. The sequence is that of Microcin E492 immunity protein from Klebsiella pneumoniae.